Here is a 348-residue protein sequence, read N- to C-terminus: Dihydroorotate dehydrogenase (quinone) (348 aa).

FMN contacts are provided by residues 65–69 (AGLDK) and Thr89. Substrate is bound at residue Lys69. Position 114 to 118 (114 to 118 (NRLGF)) interacts with substrate. The FMN site is built by Asn147 and Asn180. Asn180 is a binding site for substrate. The Nucleophile role is filled by Ser183. A substrate-binding site is contributed by Asn185. Lys225 and Thr253 together coordinate FMN. 254-255 (NT) serves as a coordination point for substrate. Residues Gly276, Gly305, and 326-327 (YS) contribute to the FMN site.

Belongs to the dihydroorotate dehydrogenase family. Type 2 subfamily. Monomer. FMN is required as a cofactor.

The protein resides in the cell membrane. The enzyme catalyses (S)-dihydroorotate + a quinone = orotate + a quinol. Its pathway is pyrimidine metabolism; UMP biosynthesis via de novo pathway; orotate from (S)-dihydroorotate (quinone route): step 1/1. In terms of biological role, catalyzes the conversion of dihydroorotate to orotate with quinone as electron acceptor. The chain is Dihydroorotate dehydrogenase (quinone) from Delftia acidovorans (strain DSM 14801 / SPH-1).